Reading from the N-terminus, the 739-residue chain is Lysine decarboxylase (739 aa).

Position 367 is an N6-(pyridoxal phosphate)lysine (K367). The span at A714–K726 shows a compositional bias: basic and acidic residues. The interval A714–S739 is disordered. Basic residues predominate over residues A728–S739.

Belongs to the Orn/Lys/Arg decarboxylase class-I family. Pyridoxal 5'-phosphate serves as cofactor.

Its subcellular location is the cytoplasm. The catalysed reaction is L-lysine + H(+) = cadaverine + CO2. The sequence is that of Lysine decarboxylase from Hafnia alvei.